The primary structure comprises 963 residues: Importin-13 (963 aa).

HEAT repeat units lie at residues 24 to 54, 56 to 88, 95 to 135, 142 to 179, 194 to 231, 236 to 268, 276 to 325, 330 to 372, 375 to 438, 440 to 476, 487 to 522, 524 to 558, 562 to 600, 603 to 648, 676 to 716, 720 to 754, 761 to 803, 815 to 845, 860 to 893, and 897 to 931; these read ENVEKALHQLYYDPNIENKNLAQKWLMQAQA, PQAWHFSWQLLQPDKVPEIQYFGASALHIKISR, TDQY…LSMM, AVADMVRLFQAEDSPVDSQGRCLALLELLTVLPEEFQT, LAVECGAVFPLLEQLLQQPSSPSCVRQKVLKCFSSWVQ, LQDCEALIQAAFAALQDSELFDSSVEAIVNAIS, VNTL…ALLD, WQSF…DDIL, EAEK…YEML, AELLSNLYDKLGRLLTSSEEPYSWQHTEALLYGFQSI, VVPGLIGLIPRISISNVQLADTVMFTIGALSEWLAD, PVMINSVLPLVLHALGNPELSISSVSTLKKICREC, LPPYAANIVAVSQDVLMKQIHKTSQCMWLMQALGFLLSA, VEEI…SNLF, PVVV…VKTL, FAPMVPQLCEMLGRMYSTIPQASALDLTRQLVHIF, FPPI…ALKR, VKAVFQCAVLALKFPEAPTVKASCGFFTELL, EDGRMLLIAVLEAIGGQASRSLMDCFADILFALN, and FSLLSVWIKEALQAPGFPSARLSPEQKDTFSQQIL. An Importin N-terminal domain is found at 45 to 111; it reads AQKWLMQAQA…KAQLFTQITR (67 aa).

This sequence belongs to the importin beta family. In terms of assembly, interacts with UBC9, RAN, RBM8A, eIF-1A and PAX6.

Its subcellular location is the cytoplasm. It is found in the nucleus. Functions in nuclear protein import as nuclear transport receptor. Serves as receptor for nuclear localization signals (NLS) in cargo substrates. Is thought to mediate docking of the importin/substrate complex to the nuclear pore complex (NPC) through binding to nucleoporin and the complex is subsequently translocated through the pore by an energy requiring, Ran-dependent mechanism. At the nucleoplasmic side of the NPC, Ran binds to the importin, the importin/substrate complex dissociates and importin is re-exported from the nucleus to the cytoplasm where GTP hydrolysis releases Ran. The directionality of nuclear import is thought to be conferred by an asymmetric distribution of the GTP- and GDP-bound forms of Ran between the cytoplasm and nucleus. Mediates the nuclear import of UBC9, the RBM8A/MAGOH complex, PAX6 and probably other members of the paired homeobox family. Also mediates nuclear export of eIF-1A, and the cytoplasmic release of eIF-1A is triggered by the loading of import substrates onto IPO13. In Bos taurus (Bovine), this protein is Importin-13 (IPO13).